The following is a 347-amino-acid chain: NADH-quinone oxidoreductase subunit H (347 aa).

The next 9 membrane-spanning stretches (helical) occupy residues 13–33 (IIMI…IAYV), 50–70 (PNVV…KFVF), 82–102 (AVFL…WAVV), 115–135 (VGIL…IMGG), 161–181 (IGFV…TDIV), 198–218 (FLDW…ISAL), 263–283 (CALT…IWIL), 286–306 (VPGI…FAMV), and 321–341 (LGWK…AFVL).

Belongs to the complex I subunit 1 family. In terms of assembly, NDH-1 is composed of 14 different subunits. Subunits NuoA, H, J, K, L, M, N constitute the membrane sector of the complex.

Its subcellular location is the cell inner membrane. The catalysed reaction is a quinone + NADH + 5 H(+)(in) = a quinol + NAD(+) + 4 H(+)(out). Functionally, NDH-1 shuttles electrons from NADH, via FMN and iron-sulfur (Fe-S) centers, to quinones in the respiratory chain. The immediate electron acceptor for the enzyme in this species is believed to be ubiquinone. Couples the redox reaction to proton translocation (for every two electrons transferred, four hydrogen ions are translocated across the cytoplasmic membrane), and thus conserves the redox energy in a proton gradient. This subunit may bind ubiquinone. This is NADH-quinone oxidoreductase subunit H from Rhizobium johnstonii (strain DSM 114642 / LMG 32736 / 3841) (Rhizobium leguminosarum bv. viciae).